The following is a 196-amino-acid chain: Ribonuclease HII (196 aa).

Positions 1–196 (MVTIGVDEAG…FAPVAQLQLL (196 aa)) constitute an RNase H type-2 domain. A divalent metal cation is bound by residues D7, E8, and D103.

Belongs to the RNase HII family. It depends on Mn(2+) as a cofactor. Mg(2+) is required as a cofactor.

Its subcellular location is the cytoplasm. The catalysed reaction is Endonucleolytic cleavage to 5'-phosphomonoester.. In terms of biological role, endonuclease that specifically degrades the RNA of RNA-DNA hybrids. In Novosphingobium aromaticivorans (strain ATCC 700278 / DSM 12444 / CCUG 56034 / CIP 105152 / NBRC 16084 / F199), this protein is Ribonuclease HII.